A 157-amino-acid polypeptide reads, in one-letter code: Transcriptional repressor NrdR (157 aa).

A disordered region spans residues 1–24 (MRCPKCGGNKSSVVDSRQAEDGNT). Residues 3-34 (CPKCGGNKSSVVDSRQAEDGNTIRRRRECEEC) fold into a zinc finger. The ATP-cone domain maps to 49–139 (LVVVKKDGTR…VYRSFKDVGE (91 aa)).

This sequence belongs to the NrdR family. Zn(2+) serves as cofactor.

Negatively regulates transcription of bacterial ribonucleotide reductase nrd genes and operons by binding to NrdR-boxes. The sequence is that of Transcriptional repressor NrdR from Streptococcus sanguinis (strain SK36).